A 21-amino-acid polypeptide reads, in one-letter code: Nitrilase (21 aa).

The protein belongs to the carbon-nitrogen hydrolase superfamily. Nitrilase family.

The enzyme catalyses a nitrile + 2 H2O = a carboxylate + NH4(+). In terms of biological role, acts on many kinds of nitrile compounds such as aliphatic, aromatic, and heterocyclic mononitriles or dinitriles. Prefers S-(-)-2-(4'-isobutylphenyl)-propionitrile to R-(+)-2-(4'-isobutylphenyl)-propionitrile as the substrate. This chain is Nitrilase, found in Acinetobacter sp. (strain AK226).